Consider the following 317-residue polypeptide: CXXC-type zinc finger protein 5 (317 aa).

Gly residues predominate over residues 1–10; it reads MSSLGGGSQD. Positions 1–92 are disordered; the sequence is MSSLGGGSQD…SFGSSGGGGS (92 aa). Composition is skewed to low complexity over residues 11-27 and 36-51; these read AGGS…SGSG and STAV…VADD. Residues 251–292 form a CXXC-type zinc finger; the sequence is GKKKRKRCGMCAPCRRRINCEQCSSCRNRKTGHQICKFRKCE. The short motif at 252 to 257 is the Nuclear localization signal element; sequence KKKRKR. Zn(2+) contacts are provided by Cys-258, Cys-261, Cys-264, Cys-270, Cys-273, Cys-276, Cys-286, and Cys-291.

As to quaternary structure, interacts with DVL1. Interacts with RBPJ.

It localises to the nucleus. Its subcellular location is the cytoplasm. Functionally, may indirectly participate in activation of the NF-kappa-B and MAPK pathways. Acts as a mediator of BMP4-mediated modulation of canonical Wnt signaling activity in neural stem cells. Required for DNA damage-induced ATM phosphorylation, p53 activation and cell cycle arrest. Involved in myelopoiesis. Binds to the oxygen responsive element of COX4I2 and represses its transcription under hypoxia conditions (4% oxygen), as well as normoxia conditions (20% oxygen). May repress COX4I2 transactivation induced by CHCHD2 and RBPJ. Binds preferentially to DNA containing cytidine-phosphate-guanosine (CpG) dinucleotides over CpH (H=A, T, and C), hemimethylated-CpG and hemimethylated-hydroxymethyl-CpG. This Mus musculus (Mouse) protein is CXXC-type zinc finger protein 5 (Cxxc5).